A 1456-amino-acid chain; its full sequence is Sterol 3-beta-glucosyltransferase (1456 aa).

The segment covering 1-12 (MASQDRGSDRTS) has biased composition (basic and acidic residues). The disordered stretch occupies residues 1–229 (MASQDRGSDR…RSPAAAATGE (229 aa)). A compositionally biased stretch (basic residues) spans 13–22 (RRLTKKRKDG). Over residues 23–48 (KKPMRDVSLDMPERFKDGDDAHEDVT) the composition is skewed to basic and acidic residues. 2 stretches are compositionally biased toward polar residues: residues 54–63 (HTMSMNQSIF) and 109–123 (RLST…SGQT). One can recognise a GRAM 1 domain in the interval 236 to 283 (KRIQHIFEFAQEEEVISEYPCWLLQSILLQGYMYITQKHICFYAYIPK). The PH domain occupies 287 to 384 (DVSKTGYLSK…WVKSIQKVIF (98 aa)). 2 disordered regions span residues 500 to 612 (LSPL…TASA) and 631 to 691 (NAFS…TRLS). The segment covering 510-523 (RSSMSDISVRSSVD) has biased composition (low complexity). Basic and acidic residues-rich tracts occupy residues 524 to 536 (ANRK…RSMD), 544 to 557 (WSLE…EAHR), and 571 to 584 (RVGD…RATD). 2 stretches are compositionally biased toward polar residues: residues 585–612 (SDSA…TASA) and 631–650 (NAFS…TRSS). The region spanning 774–840 (DNFREHFAFR…KDIENVNKEK (67 aa)) is the GRAM 2 domain. 11 residues coordinate UDP-alpha-D-glucose: S966, R967, D969, A1269, H1271, H1284, S1287, G1288, T1289, D1308, and Q1309.

The protein belongs to the glycosyltransferase 28 family.

The protein resides in the cytoplasm. It is found in the preautophagosomal structure membrane. The enzyme catalyses a sterol + UDP-alpha-D-glucose = a sterol 3-beta-D-glucoside + UDP + H(+). It carries out the reaction ergosterol + UDP-alpha-D-glucose = ergosteryl 3-beta-D-glucoside + UDP + H(+). Its function is as follows. Sterol glycosyltransferase responsible for the glycosylation of ergosterol to form ergosterol-glucoside. The protein is Sterol 3-beta-glucosyltransferase of Leptosphaeria maculans (Blackleg fungus).